We begin with the raw amino-acid sequence, 399 residues long: Leu/Ile/Val-binding protein homolog 7 (399 aa).

Positions 1-22 (MEKHLIALSVAALLAGAAPASA) are cleaved as a signal peptide.

Belongs to the leucine-binding protein family.

Functionally, component of an amino-acid transport system. The polypeptide is Leu/Ile/Val-binding protein homolog 7 (Brucella suis biovar 1 (strain 1330)).